We begin with the raw amino-acid sequence, 151 residues long: Leukocyte cell-derived chemotaxin-2 (151 aa).

The N-terminal stretch at 1–18 is a signal peptide; the sequence is MIPTTILISAALLSSALA. 3 cysteine pairs are disulfide-bonded: Cys-25/Cys-60, Cys-36/Cys-41, and Cys-99/Cys-142. The Zn(2+) site is built by His-53, Asp-57, and His-138.

Belongs to the LECT2/MIM-1 family. As to expression, highly expressed in liver and weakly in testis. Not expressed in heart, brain, spleen, lung, skeletal muscle and kidney.

The protein localises to the secreted. In terms of biological role, has a neutrophil chemotactic activity. Also a positive regulator of chondrocyte proliferation. The chain is Leukocyte cell-derived chemotaxin-2 (Lect2) from Mus musculus (Mouse).